The primary structure comprises 436 residues: Gamma-glutamyl phosphate reductase (436 aa).

It belongs to the gamma-glutamyl phosphate reductase family.

It is found in the cytoplasm. The enzyme catalyses L-glutamate 5-semialdehyde + phosphate + NADP(+) = L-glutamyl 5-phosphate + NADPH + H(+). It functions in the pathway amino-acid biosynthesis; L-proline biosynthesis; L-glutamate 5-semialdehyde from L-glutamate: step 2/2. Functionally, catalyzes the NADPH-dependent reduction of L-glutamate 5-phosphate into L-glutamate 5-semialdehyde and phosphate. The product spontaneously undergoes cyclization to form 1-pyrroline-5-carboxylate. This is Gamma-glutamyl phosphate reductase from Prochlorococcus marinus subsp. pastoris (strain CCMP1986 / NIES-2087 / MED4).